We begin with the raw amino-acid sequence, 280 residues long: Antiactivator FleN (280 aa).

Residues 19-26 (KGGVGKTN), Glu153, Asn181, 215-217 (PYD), and Arg221 each bind ATP.

It belongs to the ParA family. In terms of assembly, forms homodimers. Interacts with FleQ.

Its activity is regulated as follows. ATP-binding allows dimerization and subsequent antagonistic effect against FleQ. Functionally, ATPase that plays an important role in maintaining flagellar number in Pseudomonas aeruginosa. Exhibits anti-activator activity against FleQ, the global transcriptional regulator of flagellar genes. The sequence is that of Antiactivator FleN from Pseudomonas aeruginosa (strain ATCC 15692 / DSM 22644 / CIP 104116 / JCM 14847 / LMG 12228 / 1C / PRS 101 / PAO1).